Reading from the N-terminus, the 469-residue chain is 3-isopropylmalate dehydratase large subunit (469 aa).

3 residues coordinate [4Fe-4S] cluster: Cys-347, Cys-408, and Cys-411.

This sequence belongs to the aconitase/IPM isomerase family. LeuC type 1 subfamily. In terms of assembly, heterodimer of LeuC and LeuD. [4Fe-4S] cluster serves as cofactor.

It catalyses the reaction (2R,3S)-3-isopropylmalate = (2S)-2-isopropylmalate. It functions in the pathway amino-acid biosynthesis; L-leucine biosynthesis; L-leucine from 3-methyl-2-oxobutanoate: step 2/4. In terms of biological role, catalyzes the isomerization between 2-isopropylmalate and 3-isopropylmalate, via the formation of 2-isopropylmaleate. This Actinobacillus pleuropneumoniae serotype 5b (strain L20) protein is 3-isopropylmalate dehydratase large subunit.